A 337-amino-acid polypeptide reads, in one-letter code: GTP 3',8-cyclase (337 aa).

One can recognise a Radical SAM core domain in the interval 17–243 (PFQRQYYYLR…HKSHTDGPAK (227 aa)). Arginine 26 contributes to the GTP binding site. [4Fe-4S] cluster contacts are provided by cysteine 33 and cysteine 37. An S-adenosyl-L-methionine-binding site is contributed by tyrosine 39. Cysteine 40 contacts [4Fe-4S] cluster. Arginine 76 contributes to the GTP binding site. Glycine 80 contacts S-adenosyl-L-methionine. Threonine 107 lines the GTP pocket. Residue serine 131 coordinates S-adenosyl-L-methionine. Lysine 168 serves as a coordination point for GTP. Methionine 202 provides a ligand contact to S-adenosyl-L-methionine. 2 residues coordinate [4Fe-4S] cluster: cysteine 265 and cysteine 268. A GTP-binding site is contributed by 270–272 (RLR). Cysteine 282 serves as a coordination point for [4Fe-4S] cluster.

Belongs to the radical SAM superfamily. MoaA family. Monomer and homodimer. The cofactor is [4Fe-4S] cluster.

The enzyme catalyses GTP + AH2 + S-adenosyl-L-methionine = (8S)-3',8-cyclo-7,8-dihydroguanosine 5'-triphosphate + 5'-deoxyadenosine + L-methionine + A + H(+). Its pathway is cofactor biosynthesis; molybdopterin biosynthesis. Its function is as follows. Catalyzes the cyclization of GTP to (8S)-3',8-cyclo-7,8-dihydroguanosine 5'-triphosphate. In Haemophilus influenzae (strain ATCC 51907 / DSM 11121 / KW20 / Rd), this protein is GTP 3',8-cyclase.